A 325-amino-acid polypeptide reads, in one-letter code: GMP reductase (325 aa).

The Thioimidate intermediate role is filled by Cys174. 203-226 (IIADGGIRTNGDIAKSIRFGANMV) is a binding site for NADP(+).

The protein belongs to the IMPDH/GMPR family. GuaC type 2 subfamily.

The catalysed reaction is IMP + NH4(+) + NADP(+) = GMP + NADPH + 2 H(+). Catalyzes the irreversible NADPH-dependent deamination of GMP to IMP. It functions in the conversion of nucleobase, nucleoside and nucleotide derivatives of G to A nucleotides, and in maintaining the intracellular balance of A and G nucleotides. The polypeptide is GMP reductase (Latilactobacillus sakei subsp. sakei (strain 23K) (Lactobacillus sakei subsp. sakei)).